We begin with the raw amino-acid sequence, 202 residues long: MSALSSCFNGSDSRWDPPYPKADVRRLMGTYSPDFPSWPKLIVWWNETFLTFSDGPWVVSQMRRLGVLDGKDSGELIILVQDMYPDVCPLINRARYDGTYKWTSEMMRKILRMHTIMTPESPVILLDWTNQLRDICKKVDALLWGQDVRGPAYYAVRTTAHFFTEFKDHRIHCIGMSLGGTVCAALSRQLLVRTEGQKRLAA.

This is an uncharacterized protein from Galliformes (FAdV-1).